Consider the following 52-residue polypeptide: Phospholamban (52 aa).

Met1 carries the N-acetylmethionine modification. Topologically, residues 1 to 31 (MDKVQYLTRSAIRRASTIEMPQQARQNLQNL) are cytoplasmic. Ser16 is subject to Phosphoserine; by PKA and DMPK. Thr17 is modified (phosphothreonine; by CaMK2). A helical transmembrane segment spans residues 32–52 (FINFCLILICLLLICIIVMLL). A lipid anchor (S-palmitoyl cysteine) is attached at Cys36.

This sequence belongs to the phospholamban family. In terms of assembly, homopentamer. Can also form heterooligomers with other sarcoplasmic/endoplasmic reticulum calcium ATPase (SERCA) regulators ARLN, ERLN, SLN and STRIT1/DWORF. Monomer. Interacts with HAX1. Interacts as a monomer with ATP2A2; the interaction decreases ATP2A2 Ca(2+) affinity. Interacts with VMP1; VMP1 competes with PLN and SLN to prevent them from forming an inhibitory complex with ATP2A2. Interacts with S100A1 in a Ca(2+)-dependent manner. In terms of processing, phosphorylation by DMPK may stimulate sarcoplasmic reticulum calcium uptake in cardiomyocytes. Phosphorylation by PKA abolishes the inhibition of ATP2A2-mediated calcium uptake. Phosphorylated at Thr-17 by CaMK2, and in response to beta-adrenergic stimulation. Palmitoylated by ZDHHC16, promoting formation of the homopentamer. Post-translationally, in elongated spermatids, proteolytically cleaved by SPPL2C which modulates intracellular Ca(2+) homeostasis. As to expression, heart.

The protein resides in the endoplasmic reticulum membrane. It localises to the sarcoplasmic reticulum membrane. It is found in the mitochondrion membrane. The protein localises to the membrane. Reversibly inhibits the activity of ATP2A2/SERCA2 in cardiac sarcoplasmic reticulum by decreasing the apparent affinity of the ATPase for Ca(2+). Binds preferentially to the ATP-bound E1 conformational form of ATP2A2 which predominates at low Ca(2+) concentrations during the diastolic phase of the cardiac cycle. Inhibits ATP2A2 Ca(2+) affinity by disrupting its allosteric activation by ATP. Modulates the contractility of the heart muscle in response to physiological stimuli via its effects on ATP2A2. Modulates calcium re-uptake during muscle relaxation and plays an important role in calcium homeostasis in the heart muscle. The degree of ATP2A2 inhibition depends on the oligomeric state of PLN. ATP2A2 inhibition is alleviated by PLN phosphorylation. Also inhibits the activity of ATP2A3/SERCA3. Controls intracellular Ca(2+) levels in elongated spermatids and may play a role in germ cell differentiation. In the thalamic reticular nucleus of the brain, plays a role in the regulation of sleep patterns and executive functioning. The chain is Phospholamban from Canis lupus familiaris (Dog).